A 660-amino-acid chain; its full sequence is Probable serine/threonine-protein kinase CE0033 (660 aa).

The region spanning 9–278 (YELGASIGSG…AEMAADLELL (270 aa)) is the Protein kinase domain. Residues 15–23 (IGSGGMSEV) and Lys38 contribute to the ATP site. Residue Asp136 is the Proton acceptor of the active site. Residues 288 to 319 (RAHVEKPDEPETVVVPQRLSTPPPPPTPAMPA) form a disordered region. PASTA domains are found at residues 377 to 443 (SAST…TISS), 444 to 512 (GREV…TVST), and 513 to 577 (GPSL…EISN).

Belongs to the protein kinase superfamily. Ser/Thr protein kinase family.

It catalyses the reaction L-seryl-[protein] + ATP = O-phospho-L-seryl-[protein] + ADP + H(+). It carries out the reaction L-threonyl-[protein] + ATP = O-phospho-L-threonyl-[protein] + ADP + H(+). This chain is Probable serine/threonine-protein kinase CE0033, found in Corynebacterium efficiens (strain DSM 44549 / YS-314 / AJ 12310 / JCM 11189 / NBRC 100395).